A 177-amino-acid chain; its full sequence is Protein OPG036 (177 aa).

It belongs to the poxviridae OPG036 family.

It localises to the host nucleus. Functionally, plays a role in the inhibition of host innate immune response. Within the host nucleus, inhibits activation of interferon-beta promoter by inhibiting IRF3 activation. The sequence is that of Protein OPG036 (OPG036) from Monkeypox virus.